The primary structure comprises 129 residues: Glycine cleavage system H protein (129 aa).

The 83-residue stretch at 24 to 106 folds into the Lipoyl-binding domain; the sequence is IAVIGISAYA…YEQGWLLKVQ (83 aa). An N6-lipoyllysine modification is found at K65.

It belongs to the GcvH family. As to quaternary structure, the glycine cleavage system is composed of four proteins: P, T, L and H. (R)-lipoate serves as cofactor.

Functionally, the glycine cleavage system catalyzes the degradation of glycine. The H protein shuttles the methylamine group of glycine from the P protein to the T protein. The sequence is that of Glycine cleavage system H protein from Synechococcus elongatus (strain ATCC 33912 / PCC 7942 / FACHB-805) (Anacystis nidulans R2).